The primary structure comprises 302 residues: MASHLSIRSLSGSSRYLARNKALKFTDLKSIKLREPIVPTHKNFDVSPDHPLWAFFPDGNKSETCFRETVDLDIQSRPWGLPELRRKSFEDLHKLWYLILKERNILAREVRLADSFNERSTHAHNDLDDKLTLTQKRIKQALIERQVAYERVQTFTDNQKEYLSDFEESYINADSSEIVSFNEKLVRLQYAFFGIQPQLEDYNLEEDINVKFVEGLSYVANLKLKRYLSQNPQSTEEFQTPLNGVVEELPFLLRDTEEAIEEVQELRNSGANVVLHKIEVFPFLRNALGKTIQEAYASDEQL.

Belongs to the universal ribosomal protein uL29 family. Component of the mitochondrial large ribosomal subunit. Mature mitochondrial ribosomes consist of a small (37S) and a large (54S) subunit. The 37S subunit contains at least 33 different proteins and 1 molecule of RNA (15S). The 54S subunit contains at least 45 different proteins and 1 molecule of RNA (21S).

It is found in the mitochondrion. The sequence is that of Large ribosomal subunit protein uL29m (MRPL4) from Debaryomyces hansenii (strain ATCC 36239 / CBS 767 / BCRC 21394 / JCM 1990 / NBRC 0083 / IGC 2968) (Yeast).